The sequence spans 221 residues: Serine/arginine-rich splicing factor 9 (221 aa).

2 consecutive RRM domains span residues 14–89 (GRIY…FPRA) and 111–187 (FRVL…PERG). Residue K36 forms a Glycyl lysine isopeptide (Lys-Gly) (interchain with G-Cter in SUMO2) linkage. Low complexity predominate over residues 187–198 (GTSYGCSRSRSG). Residues 187–221 (GTSYGCSRSRSGSRGRDSPYQSRGSPHYFSPFRPY) are disordered. The segment at 188–200 (TSYGCSRSRSGSR) is interaction with SAFB1. 6 positions are modified to phosphoserine: S189, S193, S195, S204, S208, and S211. Phosphotyrosine is present on Y214. S216 is modified (phosphoserine).

It belongs to the splicing factor SR family. As to quaternary structure, interacts with KHDRBS3. Interacts with HABP4. Interacts with NOL3/ARC/NOP30. Interacts with NSEP1/YB-1/YB1. Interacts with SAFB/SAFB1. Interacts with SRSF6/SFRS6. Interacts with TRA2B/SFRS10. Interacts with C1QBP. May also interact with DUSP11/PIR1. Extensively phosphorylated on serine residues in the RS domain.

It is found in the nucleus. In terms of biological role, plays a role in constitutive splicing and can modulate the selection of alternative splice sites. Represses the splicing of MAPT/Tau exon 10. The protein is Serine/arginine-rich splicing factor 9 (Srsf9) of Rattus norvegicus (Rat).